The following is a 262-amino-acid chain: Transmembrane protein 81 (262 aa).

An N-terminal signal peptide occupies residues 1–30 (MKAVATVFICGSLVLITYLPLVVTSPQTLA). At 31 to 225 (IPEKLRQAVG…HLPGWRKKVS (195 aa)) the chain is on the extracellular side. Asparagine 45 carries an N-linked (GlcNAc...) asparagine glycan. Residues 83–171 (TNWICGMLHF…VQQLKNLKLV (89 aa)) enclose the Ig-like domain. The cysteines at positions 104 and 160 are disulfide-linked. A glycan (N-linked (GlcNAc...) asparagine) is linked at asparagine 211. Residues 226-246 (LALGVGIAAGVVGGVLVNVAL) traverse the membrane as a helical segment. Residues 247 to 262 (CRVLGGTGGNGNLSSL) are Cytoplasmic-facing.

Forms a complex with IZUMO1 and SPACA6 on spermatocyte cell membrane required for fertilization.

It is found in the cell membrane. Its function is as follows. Essential fertilization factor required for male fertility. Part of a conserved trimeric sperm complex with the essential fertilization factors IZUMO1 and SPACA6 which bridges sperm and oocyte membranes during fertilization by binding to IZUMO1R/JUNO on the oocyte. This Rattus norvegicus (Rat) protein is Transmembrane protein 81 (Tmem81).